The sequence spans 277 residues: Thiazole synthase (277 aa).

The active-site Schiff-base intermediate with DXP is Lys-119. 1-deoxy-D-xylulose 5-phosphate-binding positions include Gly-180, 206–207, and 228–229; these read AG and NT.

Belongs to the ThiG family. As to quaternary structure, homotetramer. Forms heterodimers with either ThiH or ThiS.

The protein localises to the plastid. The protein resides in the chloroplast. The catalysed reaction is [ThiS sulfur-carrier protein]-C-terminal-Gly-aminoethanethioate + 2-iminoacetate + 1-deoxy-D-xylulose 5-phosphate = [ThiS sulfur-carrier protein]-C-terminal Gly-Gly + 2-[(2R,5Z)-2-carboxy-4-methylthiazol-5(2H)-ylidene]ethyl phosphate + 2 H2O + H(+). Its pathway is cofactor biosynthesis; thiamine diphosphate biosynthesis. Catalyzes the rearrangement of 1-deoxy-D-xylulose 5-phosphate (DXP) to produce the thiazole phosphate moiety of thiamine. Sulfur is provided by the thiocarboxylate moiety of the carrier protein ThiS. In vitro, sulfur can be provided by H(2)S. The protein is Thiazole synthase of Porphyra purpurea (Red seaweed).